Here is a 453-residue protein sequence, read N- to C-terminus: MTTDTIVAQATAPGRGGVGIIRISGDLATNVAMAVLGKVPKTRYADYCDFKDADDRVIDQGIALFFKGPNSFTGEDVLELQGHGGQIVLDMLIKRVMQVSGVRIAKPGEFSEQAFLNDKLDLTQAEAIADLIDATSEQAAKSALQSLQGEFSKEVHELVEQVTNLRLYVEAAIDFPDEEVDFLSDGKIANALYRIIAKLDTVQDSAKQGSIIREGMKVVIAGRPNAGKSSLLNALAGKESAIVTEIAGTTRDVLREHIHLDGMPLHIIDTAGLRDTLDTVEKIGIERAWAEIATADRVLFMVDGTTTDAVDPHDIWPDFIDRLPTRLGVTVVRNKADLTGESLEKSQEQGFDVYRISAKTGLGVEELKQHLKSLMGYQSNLEGGFIARRRHLEALELAASHLQLGKEQLEVYLAGELLAEELRMAQMALSEITGKFTSDDLLGKIFSSFCIGK.

Arg-22, Glu-79, and Lys-119 together coordinate (6S)-5-formyl-5,6,7,8-tetrahydrofolate. Positions 215-376 (GMKVVIAGRP…LKQHLKSLMG (162 aa)) constitute a TrmE-type G domain. Residue Asn-225 coordinates K(+). Residues 225–230 (NAGKSS), 244–250 (TEIAGTT), 269–272 (DTAG), and 334–337 (NKAD) each bind GTP. Ser-229 is a Mg(2+) binding site. K(+) is bound by residues Thr-244, Ile-246, and Thr-249. Thr-250 is a Mg(2+) binding site. (6S)-5-formyl-5,6,7,8-tetrahydrofolate is bound at residue Lys-453.

The protein belongs to the TRAFAC class TrmE-Era-EngA-EngB-Septin-like GTPase superfamily. TrmE GTPase family. Homodimer. Heterotetramer of two MnmE and two MnmG subunits. It depends on K(+) as a cofactor.

It localises to the cytoplasm. Exhibits a very high intrinsic GTPase hydrolysis rate. Involved in the addition of a carboxymethylaminomethyl (cmnm) group at the wobble position (U34) of certain tRNAs, forming tRNA-cmnm(5)s(2)U34. In Shewanella denitrificans (strain OS217 / ATCC BAA-1090 / DSM 15013), this protein is tRNA modification GTPase MnmE.